The sequence spans 332 residues: Ribosomal RNA small subunit methyltransferase H (332 aa).

Residues 36 to 38, Asp54, Phe81, Asp102, and Gln109 each bind S-adenosyl-L-methionine; that span reads GGY. A disordered region spans residues 297–318; it reads ARSAKLRGAERTEAPAHAAGDL.

The protein belongs to the methyltransferase superfamily. RsmH family.

It localises to the cytoplasm. It carries out the reaction cytidine(1402) in 16S rRNA + S-adenosyl-L-methionine = N(4)-methylcytidine(1402) in 16S rRNA + S-adenosyl-L-homocysteine + H(+). Its function is as follows. Specifically methylates the N4 position of cytidine in position 1402 (C1402) of 16S rRNA. The sequence is that of Ribosomal RNA small subunit methyltransferase H from Rhodopseudomonas palustris (strain TIE-1).